The sequence spans 248 residues: NAD kinase (248 aa).

Catalysis depends on aspartate 45, which acts as the Proton acceptor. NAD(+) is bound by residues 45–46 (DG), arginine 50, 110–111 (NE), and aspartate 138.

The protein belongs to the NAD kinase family. It depends on a divalent metal cation as a cofactor.

Its subcellular location is the cytoplasm. It carries out the reaction NAD(+) + ATP = ADP + NADP(+) + H(+). Functionally, involved in the regulation of the intracellular balance of NAD and NADP, and is a key enzyme in the biosynthesis of NADP. Catalyzes specifically the phosphorylation on 2'-hydroxyl of the adenosine moiety of NAD to yield NADP. The chain is NAD kinase from Sulfurisphaera tokodaii (strain DSM 16993 / JCM 10545 / NBRC 100140 / 7) (Sulfolobus tokodaii).